A 602-amino-acid chain; its full sequence is RNA-binding NOB1-like protein (602 aa).

Positions 1 to 25 (MDPKPTSMWSSIVKKDPPSKPPVND) are disordered. One can recognise a PINc domain in the interval 48–134 (VVDANAIIEG…LKLIALSYTL (87 aa)). Disordered stretches follow at residues 258–278 (SQGQ…VSRS) and 301–331 (IQKD…GEDI). Residues 301 to 329 (IQKDQEADKARHTKEANETHAKDSGKNGE) show a composition bias toward basic and acidic residues. A coiled-coil region spans residues 331–365 (ISSILKDMRLEEESLRALQEETEETNAEATLINGE). An NOB1 zinc finger spans residues 452–522 (IRQLHRWILK…QYSIPMPKGG (71 aa)). Cys462, Cys465, Cys477, and Cys480 together coordinate Zn(2+).

This sequence belongs to the NOB1 family. As to quaternary structure, component of the small ribosomal subunit, ribosomal RNA processing complex (SSU RRP complex). As to expression, highly expressed in flowers and siliques and at lower levels in roots, hypocotyls, stems, leaves and seeds.

The protein localises to the nucleus. It is found in the nucleoplasm. It localises to the cytoplasm. Essential protein required during embryogenesis and pollen development. Endonuclease cleaving pre-rRNA at the 3' end of the mature 18S rRNA (D-site); cleaves 20S pre-rRNA in the cytoplasm. Required for processing of 20S pre-rRNA precursor and biogenesis of 40S ribosomal subunits. The chain is RNA-binding NOB1-like protein from Arabidopsis thaliana (Mouse-ear cress).